Consider the following 579-residue polypeptide: Type IV pilus assembly ATPase PilB (579 aa).

Glycine 340–valine 345 is a binding site for ATP. The Zn(2+) site is built by cysteine 470, cysteine 473, cysteine 507, and cysteine 510.

This sequence belongs to the GSP E family. In terms of assembly, interacts with CpiA.

It is found in the cytoplasm. Inhibited by the inhibitory protein CpiA. Its function is as follows. ATPase component of the type IV pilus (T4P). Acts as a molecular motor to provide the energy that is required for biogenesis of the pilus and the extrusion of substrates generated in the cytoplasm. PilB is required for optimal T4P extension and, consequently, efficient natural transformation. May promote processive T4P extension. The sequence is that of Type IV pilus assembly ATPase PilB from Acinetobacter baylyi (strain ATCC 33305 / BD413 / ADP1).